Reading from the N-terminus, the 197-residue chain is FMN-dependent NADH:quinone oxidoreductase (197 aa).

FMN is bound by residues Ser-10 and 16-18 (SIS).

Belongs to the azoreductase type 1 family. Homodimer. FMN is required as a cofactor.

It catalyses the reaction 2 a quinone + NADH + H(+) = 2 a 1,4-benzosemiquinone + NAD(+). The enzyme catalyses N,N-dimethyl-1,4-phenylenediamine + anthranilate + 2 NAD(+) = 2-(4-dimethylaminophenyl)diazenylbenzoate + 2 NADH + 2 H(+). Functionally, quinone reductase that provides resistance to thiol-specific stress caused by electrophilic quinones. Also exhibits azoreductase activity. Catalyzes the reductive cleavage of the azo bond in aromatic azo compounds to the corresponding amines. This chain is FMN-dependent NADH:quinone oxidoreductase, found in Erythrobacter litoralis (strain HTCC2594).